A 475-amino-acid polypeptide reads, in one-letter code: Trifunctional enzyme subunit beta, mitochondrial (475 aa).

The N-terminal 34 residues, 1–34 (MTTILTSTFRNLSTTSKWALRSSIRPLSCSSQLH), are a transit peptide targeting the mitochondrion. Lysine 53 bears the N6-succinyllysine mark. Lysine 73 bears the N6-acetyllysine; alternate mark. The residue at position 73 (lysine 73) is an N6-succinyllysine; alternate. Cysteine 139 acts as the Acyl-thioester intermediate in catalysis. Residues 174–221 (IRHSRNMRKMMLDLNKAKTLGQRLSLLSKFRLNFLSPELPAVAEFSTN) lie within the membrane without spanning it. Lysine 189 bears the N6-acetyllysine; alternate mark. The residue at position 189 (lysine 189) is an N6-succinyllysine; alternate. Residues lysine 191, lysine 273, and lysine 292 each carry the N6-succinyllysine modification. Lysine 294 carries the N6-acetyllysine; alternate modification. Lysine 294 carries the post-translational modification N6-succinyllysine; alternate. An N6-acetyllysine modification is found at lysine 299. Residue lysine 333 is modified to N6-acetyllysine; alternate. Position 333 is an N6-succinyllysine; alternate (lysine 333). 2 positions are modified to N6-acetyllysine: lysine 349 and lysine 362. Cysteine 459 (proton donor/acceptor) is an active-site residue.

It belongs to the thiolase-like superfamily. Thiolase family. Heterotetramer of 2 alpha/HADHA and 2 beta/HADHB subunits; forms the mitochondrial trifunctional enzyme. Also purified as higher order heterooligomers including a 4 alpha/HADHA and 4 beta/HADHB heterooligomer which physiological significance remains unclear. The mitochondrial trifunctional enzyme interacts with MTLN. Interacts with RSAD2/viperin. Post-translationally, acetylation of Lys-202 is observed in liver mitochondria from fasted mice but not from fed mice.

Its subcellular location is the mitochondrion. It localises to the mitochondrion inner membrane. The protein resides in the mitochondrion outer membrane. It is found in the endoplasmic reticulum. It carries out the reaction an acyl-CoA + acetyl-CoA = a 3-oxoacyl-CoA + CoA. The enzyme catalyses butanoyl-CoA + acetyl-CoA = 3-oxohexanoyl-CoA + CoA. The catalysed reaction is hexanoyl-CoA + acetyl-CoA = 3-oxooctanoyl-CoA + CoA. It catalyses the reaction octanoyl-CoA + acetyl-CoA = 3-oxodecanoyl-CoA + CoA. It carries out the reaction decanoyl-CoA + acetyl-CoA = 3-oxododecanoyl-CoA + CoA. The enzyme catalyses dodecanoyl-CoA + acetyl-CoA = 3-oxotetradecanoyl-CoA + CoA. The catalysed reaction is tetradecanoyl-CoA + acetyl-CoA = 3-oxohexadecanoyl-CoA + CoA. It participates in lipid metabolism; fatty acid beta-oxidation. Mitochondrial trifunctional enzyme catalyzes the last three of the four reactions of the mitochondrial beta-oxidation pathway. The mitochondrial beta-oxidation pathway is the major energy-producing process in tissues and is performed through four consecutive reactions breaking down fatty acids into acetyl-CoA. Among the enzymes involved in this pathway, the trifunctional enzyme exhibits specificity for long-chain fatty acids. Mitochondrial trifunctional enzyme is a heterotetrameric complex composed of two proteins, the trifunctional enzyme subunit alpha/HADHA carries the 2,3-enoyl-CoA hydratase and the 3-hydroxyacyl-CoA dehydrogenase activities, while the trifunctional enzyme subunit beta/HADHB described here bears the 3-ketoacyl-CoA thiolase activity. This chain is Trifunctional enzyme subunit beta, mitochondrial (Hadhb), found in Mus musculus (Mouse).